The following is a 113-amino-acid chain: Dolichyl-diphosphooligosaccharide--protein glycosyltransferase subunit DAD1 (113 aa).

Serine 2 is subject to N-acetylserine. At 2–30 the chain is on the cytoplasmic side; sequence SASVVSVISRFLEEYLSSTPQRLKLLDAY. A helical transmembrane segment spans residues 31–51; the sequence is LLYILLTGALQFGYCLLVGTF. Position 52 (proline 52) is a topological domain, lumenal. The chain crosses the membrane as a helical span at residues 53-73; the sequence is FNSFLSGFISCVGSFILAVCL. The Cytoplasmic segment spans residues 74–92; it reads RIQINPQNKADFQGISPER. A helical membrane pass occupies residues 93-113; sequence AFADFLFASTILHLVVMNFVG.

It belongs to the DAD/OST2 family. In terms of assembly, component of the oligosaccharyltransferase (OST) complex. OST exists in two different complex forms which contain common core subunits RPN1, RPN2, OST48, OST4, DAD1 and TMEM258, either STT3A or STT3B as catalytic subunits, and form-specific accessory subunits. STT3A complex assembly occurs through the formation of 3 subcomplexes. Subcomplex 1 contains RPN1 and TMEM258, subcomplex 2 contains the STT3A-specific subunits STT3A, DC2/OSTC, and KCP2 as well as the core subunit OST4, and subcomplex 3 contains RPN2, DAD1, and OST48. The STT3A complex can form stable complexes with the Sec61 complex or with both the Sec61 and TRAP complexes.

Its subcellular location is the endoplasmic reticulum membrane. The protein operates within protein modification; protein glycosylation. Its function is as follows. Subunit of the oligosaccharyl transferase (OST) complex that catalyzes the initial transfer of a defined glycan (Glc(3)Man(9)GlcNAc(2) in eukaryotes) from the lipid carrier dolichol-pyrophosphate to an asparagine residue within an Asn-X-Ser/Thr consensus motif in nascent polypeptide chains, the first step in protein N-glycosylation. N-glycosylation occurs cotranslationally and the complex associates with the Sec61 complex at the channel-forming translocon complex that mediates protein translocation across the endoplasmic reticulum (ER). All subunits are required for a maximal enzyme activity. The protein is Dolichyl-diphosphooligosaccharide--protein glycosyltransferase subunit DAD1 of Mus musculus (Mouse).